The primary structure comprises 213 residues: ATP phosphoribosyltransferase (213 aa).

This sequence belongs to the ATP phosphoribosyltransferase family. Short subfamily. In terms of assembly, heteromultimer composed of HisG and HisZ subunits.

It is found in the cytoplasm. It carries out the reaction 1-(5-phospho-beta-D-ribosyl)-ATP + diphosphate = 5-phospho-alpha-D-ribose 1-diphosphate + ATP. The protein operates within amino-acid biosynthesis; L-histidine biosynthesis; L-histidine from 5-phospho-alpha-D-ribose 1-diphosphate: step 1/9. Its function is as follows. Catalyzes the condensation of ATP and 5-phosphoribose 1-diphosphate to form N'-(5'-phosphoribosyl)-ATP (PR-ATP). Has a crucial role in the pathway because the rate of histidine biosynthesis seems to be controlled primarily by regulation of HisG enzymatic activity. The protein is ATP phosphoribosyltransferase of Crocosphaera subtropica (strain ATCC 51142 / BH68) (Cyanothece sp. (strain ATCC 51142)).